The primary structure comprises 329 residues: Ketol-acid reductoisomerase (NADP(+)) (329 aa).

Residues 2–182 (TQLFYDTDAD…GGTRAGILET (181 aa)) enclose the KARI N-terminal Rossmann domain. Residues 25-28 (YGSQ), serine 51, serine 53, and 83-86 (DEFQ) each bind NADP(+). Histidine 108 is a catalytic residue. Position 134 (glycine 134) interacts with NADP(+). The KARI C-terminal knotted domain maps to 183–328 (NFKEETETDL…KGLRSMFSWL (146 aa)). The Mg(2+) site is built by aspartate 191, glutamate 195, glutamate 227, and glutamate 231. Serine 252 provides a ligand contact to substrate.

This sequence belongs to the ketol-acid reductoisomerase family. Mg(2+) serves as cofactor.

It catalyses the reaction (2R)-2,3-dihydroxy-3-methylbutanoate + NADP(+) = (2S)-2-acetolactate + NADPH + H(+). The catalysed reaction is (2R,3R)-2,3-dihydroxy-3-methylpentanoate + NADP(+) = (S)-2-ethyl-2-hydroxy-3-oxobutanoate + NADPH + H(+). The protein operates within amino-acid biosynthesis; L-isoleucine biosynthesis; L-isoleucine from 2-oxobutanoate: step 2/4. Its pathway is amino-acid biosynthesis; L-valine biosynthesis; L-valine from pyruvate: step 2/4. Its function is as follows. Involved in the biosynthesis of branched-chain amino acids (BCAA). Catalyzes an alkyl-migration followed by a ketol-acid reduction of (S)-2-acetolactate (S2AL) to yield (R)-2,3-dihydroxy-isovalerate. In the isomerase reaction, S2AL is rearranged via a Mg-dependent methyl migration to produce 3-hydroxy-3-methyl-2-ketobutyrate (HMKB). In the reductase reaction, this 2-ketoacid undergoes a metal-dependent reduction by NADPH to yield (R)-2,3-dihydroxy-isovalerate. This Prochlorococcus marinus (strain MIT 9312) protein is Ketol-acid reductoisomerase (NADP(+)).